Here is a 583-residue protein sequence, read N- to C-terminus: Phosphoglucomutase, cytoplasmic 2 (583 aa).

Alpha-D-glucose 1,6-bisphosphate is bound by residues arginine 25 and serine 124. Serine 124 functions as the Phosphoserine intermediate in the catalytic mechanism. Serine 124, aspartate 300, aspartate 302, and aspartate 304 together coordinate Mg(2+). Position 124 is a phosphoserine (serine 124). Positions 304, 305, 368, 387, 389, and 400 each coordinate alpha-D-glucose 1,6-bisphosphate.

It belongs to the phosphohexose mutase family. In terms of assembly, monomer. It depends on Mg(2+) as a cofactor.

The protein resides in the cytoplasm. The enzyme catalyses alpha-D-glucose 1-phosphate = alpha-D-glucose 6-phosphate. It catalyses the reaction O-phospho-L-seryl-[protein] + alpha-D-glucose 1-phosphate = alpha-D-glucose 1,6-bisphosphate + L-seryl-[protein]. The catalysed reaction is alpha-D-glucose 1,6-bisphosphate + L-seryl-[protein] = O-phospho-L-seryl-[protein] + alpha-D-glucose 6-phosphate. Catalyzes the reversible isomerization of alpha-D-glucose 1-phosphate to alpha-D-glucose 6-phosphate. The mechanism proceeds via the intermediate compound alpha-D-glucose 1,6-bisphosphate. This enzyme participates in both the breakdown and synthesis of glucose. This chain is Phosphoglucomutase, cytoplasmic 2, found in Zea mays (Maize).